We begin with the raw amino-acid sequence, 339 residues long: Ketol-acid reductoisomerase (NADP(+)) (339 aa).

The KARI N-terminal Rossmann domain maps to Met-1 to Thr-182. NADP(+) contacts are provided by residues Tyr-24–Gln-27, Arg-48, Ser-51, Ser-53, and Asp-83–Gln-86. The active site involves His-108. Residue Gly-134 coordinates NADP(+). Residues Thr-183–Ile-328 form the KARI C-terminal knotted domain. The Mg(2+) site is built by Asp-191, Glu-195, Glu-227, and Glu-231. Ser-252 contributes to the substrate binding site.

The protein belongs to the ketol-acid reductoisomerase family. Mg(2+) serves as cofactor.

It catalyses the reaction (2R)-2,3-dihydroxy-3-methylbutanoate + NADP(+) = (2S)-2-acetolactate + NADPH + H(+). The enzyme catalyses (2R,3R)-2,3-dihydroxy-3-methylpentanoate + NADP(+) = (S)-2-ethyl-2-hydroxy-3-oxobutanoate + NADPH + H(+). It functions in the pathway amino-acid biosynthesis; L-isoleucine biosynthesis; L-isoleucine from 2-oxobutanoate: step 2/4. Its pathway is amino-acid biosynthesis; L-valine biosynthesis; L-valine from pyruvate: step 2/4. Functionally, involved in the biosynthesis of branched-chain amino acids (BCAA). Catalyzes an alkyl-migration followed by a ketol-acid reduction of (S)-2-acetolactate (S2AL) to yield (R)-2,3-dihydroxy-isovalerate. In the isomerase reaction, S2AL is rearranged via a Mg-dependent methyl migration to produce 3-hydroxy-3-methyl-2-ketobutyrate (HMKB). In the reductase reaction, this 2-ketoacid undergoes a metal-dependent reduction by NADPH to yield (R)-2,3-dihydroxy-isovalerate. The chain is Ketol-acid reductoisomerase (NADP(+)) from Bradyrhizobium diazoefficiens (strain JCM 10833 / BCRC 13528 / IAM 13628 / NBRC 14792 / USDA 110).